The following is a 273-amino-acid chain: Orotidine 5'-phosphate decarboxylase (273 aa).

Lys-96 functions as the Proton donor in the catalytic mechanism.

Belongs to the OMP decarboxylase family. Type 2 subfamily.

It carries out the reaction orotidine 5'-phosphate + H(+) = UMP + CO2. It participates in pyrimidine metabolism; UMP biosynthesis via de novo pathway; UMP from orotate: step 2/2. This is Orotidine 5'-phosphate decarboxylase from Nocardioides sp. (strain ATCC BAA-499 / JS614).